A 257-amino-acid polypeptide reads, in one-letter code: Global transcriptional regulator CodY (257 aa).

Residues 1–155 are GAF domain; the sequence is MSLLSKTREL…AATVIGMEIL (155 aa). Positions 203-222 form a DNA-binding region, H-T-H motif; that stretch reads ASKVADRVGITRSVIVNALR.

This sequence belongs to the CodY family.

The protein localises to the cytoplasm. Its function is as follows. DNA-binding global transcriptional regulator which is involved in the adaptive response to starvation and acts by directly or indirectly controlling the expression of numerous genes in response to nutrient availability. During rapid exponential growth, CodY is highly active and represses genes whose products allow adaptation to nutrient depletion. The protein is Global transcriptional regulator CodY of Staphylococcus haemolyticus (strain JCSC1435).